Consider the following 254-residue polypeptide: Isoprenyl transferase (254 aa).

Residue Asp24 is part of the active site. Residue Asp24 coordinates Mg(2+). Residues 25–28, Trp29, Arg37, His41, and 69–71 contribute to the substrate site; these read GNGR and SSE. Asn72 (proton acceptor) is an active-site residue. Residues Trp73, Arg75, Arg192, and 198–200 contribute to the substrate site; that span reads RIS. Position 211 (Glu211) interacts with Mg(2+).

It belongs to the UPP synthase family. Homodimer. Requires Mg(2+) as cofactor.

In terms of biological role, catalyzes the condensation of isopentenyl diphosphate (IPP) with allylic pyrophosphates generating different type of terpenoids. This Bordetella parapertussis (strain 12822 / ATCC BAA-587 / NCTC 13253) protein is Isoprenyl transferase.